The following is a 233-amino-acid chain: Phosphoribosylformylglycinamidine synthase subunit PurQ (233 aa).

A Glutamine amidotransferase type-1 domain is found at 3-233 (SAILVFPGIN…GLVEHLAKAA (231 aa)). Cys87 acts as the Nucleophile in catalysis. Residues His204 and Glu206 contribute to the active site.

In terms of assembly, part of the FGAM synthase complex composed of 1 PurL, 1 PurQ and 2 PurS subunits.

It localises to the cytoplasm. The catalysed reaction is N(2)-formyl-N(1)-(5-phospho-beta-D-ribosyl)glycinamide + L-glutamine + ATP + H2O = 2-formamido-N(1)-(5-O-phospho-beta-D-ribosyl)acetamidine + L-glutamate + ADP + phosphate + H(+). It carries out the reaction L-glutamine + H2O = L-glutamate + NH4(+). The protein operates within purine metabolism; IMP biosynthesis via de novo pathway; 5-amino-1-(5-phospho-D-ribosyl)imidazole from N(2)-formyl-N(1)-(5-phospho-D-ribosyl)glycinamide: step 1/2. Part of the phosphoribosylformylglycinamidine synthase complex involved in the purines biosynthetic pathway. Catalyzes the ATP-dependent conversion of formylglycinamide ribonucleotide (FGAR) and glutamine to yield formylglycinamidine ribonucleotide (FGAM) and glutamate. The FGAM synthase complex is composed of three subunits. PurQ produces an ammonia molecule by converting glutamine to glutamate. PurL transfers the ammonia molecule to FGAR to form FGAM in an ATP-dependent manner. PurS interacts with PurQ and PurL and is thought to assist in the transfer of the ammonia molecule from PurQ to PurL. The sequence is that of Phosphoribosylformylglycinamidine synthase subunit PurQ from Rhodopseudomonas palustris (strain BisB18).